The chain runs to 77 residues: uncharacterized protein (77 aa).

This is an uncharacterized protein from Dictyostelium discoideum (Social amoeba).